A 257-amino-acid polypeptide reads, in one-letter code: Exosome complex component mtr3 (257 aa).

This sequence belongs to the RNase PH family. In terms of assembly, component of the RNA exosome complex. Specifically part of the catalytically inactive RNA exosome core complex (Exo-9) may associate with the catalytic subunits rrp6 and dis3 in cytoplasmic- and nuclear-specific RNA exosome complex forms. Exo-9 is formed by a hexameric base ring of RNase PH domain-containing subunits and a cap ring consisting of csl4, rrp4 and rrp40.

Its subcellular location is the cytoplasm. It is found in the nucleus. It localises to the nucleolus. Its function is as follows. Non-catalytic component of the RNA exosome complex which has 3'-&gt;5' exoribonuclease activity and participates in a multitude of cellular RNA processing and degradation events. In the nucleus, the RNA exosome complex is involved in proper maturation of stable RNA species such as rRNA, snRNA and snoRNA, in the elimination of RNA processing by-products and non-coding 'pervasive' transcripts, such as antisense RNA species and cryptic unstable transcripts (CUTs), and of mRNAs with processing defects, thereby limiting or excluding their export to the cytoplasm. In the cytoplasm, the RNA exosome complex is involved in general mRNA turnover and in RNA surveillance pathways, preventing translation of aberrant mRNAs. The catalytic inactive RNA exosome core complex of 9 subunits (Exo-9) is proposed to play a pivotal role in the binding and presentation of RNA for ribonucleolysis, and to serve as a scaffold for the association with catalytic subunits and accessory proteins or complexes. ski6 is part of the hexameric ring of RNase PH domain-containing subunits proposed to form a central channel which threads RNA substrates for degradation. The chain is Exosome complex component mtr3 (mtr3) from Schizosaccharomyces pombe (strain 972 / ATCC 24843) (Fission yeast).